A 354-amino-acid polypeptide reads, in one-letter code: UPF0324 membrane protein BL1094 (354 aa).

A run of 10 helical transmembrane segments spans residues 12–33 (IATVDMLFIGVLTLLASLFASW), 43–65 (FGALIIALLIGMIIQFPIRSAYV), 86–108 (LLRLGIILLGFKLNLAVLFTQGI), 112–129 (PIAAVVVTLTIIVCYAIA), 138–160 (LAILTAGGTGICGAAAVMGLAGS), 175–197 (VTMAVAIVAIMGTVFALLEIALG), 239–256 (LSRVLMLVFAAIIIAIWW), 271–293 (VAFPWFMLGFIGASIIGTFVPFV), 300–321 (LVDFAYIVLGMAMAALGINVNF), and 331–353 (PMLASFLTSILLMCFAAGVAMLF).

It belongs to the UPF0324 family.

It is found in the cell membrane. This is UPF0324 membrane protein BL1094 from Bifidobacterium longum (strain NCC 2705).